Here is a 266-residue protein sequence, read N- to C-terminus: HTH-type transcriptional regulator MurR (266 aa).

The HTH rpiR-type domain occupies 1–77 (MLYLTKIRNA…MALIGEYSAS (77 aa)). Positions 37 to 56 (SRQMAKQLGISQSSIVKFAQ) form a DNA-binding region, H-T-H motif. The region spanning 128-266 (IIEVISKAPF…LLFVGLVQHQ (139 aa)) is the SIS domain.

Homotetramer.

Its pathway is amino-sugar metabolism; N-acetylmuramate degradation [regulation]. Functionally, represses the expression of the murPQ operon involved in the uptake and degradation of N-acetylmuramic acid (MurNAc). Binds to two adjacent inverted repeats within the operator region. MurNAc 6-phosphate, the substrate of MurQ, is the specific inducer that weakens binding of MurR to the operator. The protein is HTH-type transcriptional regulator MurR of Shigella flexneri serotype 5b (strain 8401).